The sequence spans 193 residues: Ion-translocating oxidoreductase complex subunit A (193 aa).

6 helical membrane passes run 5 to 25 (ILLI…FLGL), 39 to 59 (IGMG…AYLV), 65 to 85 (IPLE…AVIV), 102 to 122 (LLGI…VALL), 134 to 154 (VLYG…FSAL), and 171 to 191 (SIAL…TGLV).

The protein belongs to the NqrDE/RnfAE family. In terms of assembly, the complex is composed of six subunits: RnfA, RnfB, RnfC, RnfD, RnfE and RnfG.

Its subcellular location is the cell inner membrane. In terms of biological role, part of a membrane-bound complex that couples electron transfer with translocation of ions across the membrane. This Glaesserella parasuis serovar 5 (strain SH0165) (Haemophilus parasuis) protein is Ion-translocating oxidoreductase complex subunit A.